The following is a 117-amino-acid chain: UPF0102 protein Spro_4337 (117 aa).

It belongs to the UPF0102 family.

This chain is UPF0102 protein Spro_4337, found in Serratia proteamaculans (strain 568).